A 113-amino-acid polypeptide reads, in one-letter code: Large ribosomal subunit protein uL22 (113 aa).

It belongs to the universal ribosomal protein uL22 family. In terms of assembly, part of the 50S ribosomal subunit.

In terms of biological role, this protein binds specifically to 23S rRNA; its binding is stimulated by other ribosomal proteins, e.g. L4, L17, and L20. It is important during the early stages of 50S assembly. It makes multiple contacts with different domains of the 23S rRNA in the assembled 50S subunit and ribosome. The globular domain of the protein is located near the polypeptide exit tunnel on the outside of the subunit, while an extended beta-hairpin is found that lines the wall of the exit tunnel in the center of the 70S ribosome. This is Large ribosomal subunit protein uL22 from Xanthomonas oryzae pv. oryzae (strain MAFF 311018).